Here is a 103-residue protein sequence, read N- to C-terminus: N(4)-acetylcytidine amidohydrolase (103 aa).

Residues 7–93 (TFFERFEQDI…VIAEIYPGLE (87 aa)) enclose the ASCH domain. Residue lysine 21 is the Proton acceptor of the active site. The active-site Nucleophile is threonine 24. Glutamate 74 serves as the catalytic Proton donor.

The protein belongs to the N(4)-acetylcytidine amidohydrolase family.

The catalysed reaction is N(4)-acetylcytidine + H2O = cytidine + acetate + H(+). It carries out the reaction N(4)-acetyl-2'-deoxycytidine + H2O = 2'-deoxycytidine + acetate + H(+). It catalyses the reaction N(4)-acetylcytosine + H2O = cytosine + acetate + H(+). Its function is as follows. Catalyzes the hydrolysis of N(4)-acetylcytidine (ac4C). This chain is N(4)-acetylcytidine amidohydrolase, found in Shewanella putrefaciens (strain CN-32 / ATCC BAA-453).